The primary structure comprises 218 residues: UPF0319 protein swp_2242 (218 aa).

An N-terminal signal peptide occupies residues 1 to 21 (MRLSQSVLTALLICVNSAAFA).

It belongs to the UPF0319 family.

The polypeptide is UPF0319 protein swp_2242 (Shewanella piezotolerans (strain WP3 / JCM 13877)).